A 767-amino-acid polypeptide reads, in one-letter code: 5-methyltetrahydropteroyltriglutamate--homocysteine methyltransferase (767 aa).

5-methyltetrahydropteroyltri-L-glutamate contacts are provided by residues 17-20 (RELK) and Lys117. L-homocysteine contacts are provided by residues 441–443 (IGS) and Glu494. L-methionine contacts are provided by residues 441–443 (IGS) and Glu494. Residues 525-526 (RC) and Trp571 contribute to the 5-methyltetrahydropteroyltri-L-glutamate site. Asp609 lines the L-homocysteine pocket. Residue Asp609 participates in L-methionine binding. Glu615 contacts 5-methyltetrahydropteroyltri-L-glutamate. Positions 652, 654, and 676 each coordinate Zn(2+). The active-site Proton donor is His705. Cys737 lines the Zn(2+) pocket.

Belongs to the vitamin-B12 independent methionine synthase family. The cofactor is Zn(2+).

The catalysed reaction is 5-methyltetrahydropteroyltri-L-glutamate + L-homocysteine = tetrahydropteroyltri-L-glutamate + L-methionine. It functions in the pathway amino-acid biosynthesis; L-methionine biosynthesis via de novo pathway; L-methionine from L-homocysteine (MetE route): step 1/1. Functionally, catalyzes the transfer of a methyl group from 5-methyltetrahydrofolate to homocysteine resulting in methionine formation. This Bifidobacterium longum (strain NCC 2705) protein is 5-methyltetrahydropteroyltriglutamate--homocysteine methyltransferase.